The sequence spans 74 residues: MSTHSNHPFHLVDYSPWPLTGAIGAMTTVSGMVKWFHQYDMSLFLLGNIITILTVYQWWRDVSREGTYQGLHTY.

The next 2 membrane-spanning stretches (helical) occupy residues 15–37 (SPWP…KWFH) and 42–59 (SLFL…YQWW).

The protein belongs to the cytochrome c oxidase subunit 3 family. Component of the cytochrome c oxidase (complex IV, CIV), a multisubunit enzyme composed of a catalytic core of 3 subunits and several supernumerary subunits. The complex exists as a monomer or a dimer and forms supercomplexes (SCs) in the inner mitochondrial membrane with ubiquinol-cytochrome c oxidoreductase (cytochrome b-c1 complex, complex III, CIII).

The protein localises to the mitochondrion inner membrane. The catalysed reaction is 4 Fe(II)-[cytochrome c] + O2 + 8 H(+)(in) = 4 Fe(III)-[cytochrome c] + 2 H2O + 4 H(+)(out). In terms of biological role, component of the cytochrome c oxidase, the last enzyme in the mitochondrial electron transport chain which drives oxidative phosphorylation. The respiratory chain contains 3 multisubunit complexes succinate dehydrogenase (complex II, CII), ubiquinol-cytochrome c oxidoreductase (cytochrome b-c1 complex, complex III, CIII) and cytochrome c oxidase (complex IV, CIV), that cooperate to transfer electrons derived from NADH and succinate to molecular oxygen, creating an electrochemical gradient over the inner membrane that drives transmembrane transport and the ATP synthase. Cytochrome c oxidase is the component of the respiratory chain that catalyzes the reduction of oxygen to water. Electrons originating from reduced cytochrome c in the intermembrane space (IMS) are transferred via the dinuclear copper A center (CU(A)) of subunit 2 and heme A of subunit 1 to the active site in subunit 1, a binuclear center (BNC) formed by heme A3 and copper B (CU(B)). The BNC reduces molecular oxygen to 2 water molecules using 4 electrons from cytochrome c in the IMS and 4 protons from the mitochondrial matrix. In Drosophila simulans (Fruit fly), this protein is Cytochrome c oxidase subunit 3 (mt:CoIII).